The following is a 351-amino-acid chain: MSEGEMAIIKPEMMKSYIWLETADGSIQQVEQEVAMFCPMICQEVIQKGVGSSKNYAISLPQRVNPAMLSLIFDYCRFHQVPGRSNKERKVYDEKFIRMDTKRLCELTSAADSLQLKPLVDLTSRALARIIEGKTPEEIREIFHLPDDLTEEEKLEPLKNTMDDPRIRLLNRLYAKKRKELKEREKLKSVEVEEHVDERSVDDLLSFINGRDPKVVKTSKSKKKNKKRKEQKNGSSNGTCEALEKDLHNLDSKSQSAEIVDNTASCLGDVSNLPSMEDDIFTPKTEFEDGYIDDEIDPALKELLDREVEDFARRLNSSWVLSIGQERQPVNFSINGNGTSRRLTGPAAGHK.

Positions 108–167 (TSAADSLQLKPLVDLTSRALARIIEGKTPEEIREIFHLPDDLTEEEKLEPLKNTMDDPRI) are interaction with the F-box domain of F-box proteins. Disordered stretches follow at residues 216–240 (VKTS…NGTC) and 330–351 (VNFS…AGHK). Residues 217–230 (KTSKSKKKNKKRKE) show a composition bias toward basic residues. The span at 330–342 (VNFSINGNGTSRR) shows a compositional bias: polar residues.

The protein belongs to the SKP1 family. As to quaternary structure, part of a SCF (SKP1-cullin-F-box) protein ligase complex. In terms of tissue distribution, expressed in young seedlings, roots, leaves, floral stems, inflorescences, and siliques.

It localises to the nucleus. Its pathway is protein modification; protein ubiquitination. Involved in ubiquitination and subsequent proteasomal degradation of target proteins. Together with CUL1, RBX1 and a F-box protein, it forms a SCF E3 ubiquitin ligase complex. The functional specificity of this complex depends on the type of F-box protein. In the SCF complex, it serves as an adapter that links the F-box protein to CUL1. This Arabidopsis thaliana (Mouse-ear cress) protein is SKP1-like protein 21 (ASK21).